The sequence spans 162 residues: Ribosomal RNA large subunit methyltransferase H (162 aa).

Residues Leu-78 and Gly-110 each coordinate S-adenosyl-L-methionine.

It belongs to the RNA methyltransferase RlmH family. Homodimer.

The protein localises to the cytoplasm. It carries out the reaction pseudouridine(1915) in 23S rRNA + S-adenosyl-L-methionine = N(3)-methylpseudouridine(1915) in 23S rRNA + S-adenosyl-L-homocysteine + H(+). Functionally, specifically methylates the pseudouridine at position 1915 (m3Psi1915) in 23S rRNA. This is Ribosomal RNA large subunit methyltransferase H from Bradyrhizobium sp. (strain ORS 278).